We begin with the raw amino-acid sequence, 355 residues long: Putative early 40.3 kDa protein (355 aa).

Its function is as follows. This protein is required for viral late gene expression. The sequence is that of Putative early 40.3 kDa protein (DA41) from Orgyia pseudotsugata multicapsid polyhedrosis virus (OpMNPV).